Here is a 603-residue protein sequence, read N- to C-terminus: Spastin (603 aa).

Residues 1 to 34 (MNSPGGRNNKKKPVTPAAETGPGPPTPPPPPAET) are disordered. Residues 1 to 54 (MNSPGGRNNKKKPVTPAAETGPGPPTPPPPPAETQVLLAPPSLHKRNLYLFSYP) are Cytoplasmic-facing. Residues 22–32 (PGPPTPPPPPA) show a composition bias toward pro residues. Residues 55-75 (LLAAFSLLRFLAFQLGLLFVW) constitute an intramembrane region (helical). The Cytoplasmic portion of the chain corresponds to 76 to 603 (FCERLSRRVM…WNKEFGDTTV (528 aa)). The 76-residue stretch at 113-188 (YHQQAFQYIS…LMAKDRLQLL (76 aa)) folds into the MIT domain. Positions 216-294 (GLLKPEKGAV…RTNKPTTPTT (79 aa)) are disordered. Residues 219–231 (KPEKGAVPKKKDP) are compositionally biased toward basic and acidic residues. The span at 281-294 (KNNTRTNKPTTPTT) shows a compositional bias: low complexity. 369 to 376 (GPPGNGKT) is an ATP binding site.

Belongs to the AAA ATPase family. Spastin subfamily. In terms of assembly, homohexamer. The homohexamer is stabilized by ATP-binding. The homohexamer may adopt a ring conformation through which microtubules pass prior to being severed. Interacts with microtubules.

It localises to the membrane. The protein localises to the cytoplasm. Its subcellular location is the cytoskeleton. It is found in the microtubule organizing center. The protein resides in the centrosome. It localises to the perinuclear region. The protein localises to the nucleus. It carries out the reaction n ATP + n H2O + a microtubule = n ADP + n phosphate + (n+1) alpha/beta tubulin heterodimers.. In terms of biological role, ATP-dependent microtubule severing protein that specifically recognizes and cuts microtubules that are polyglutamylated. Preferentially recognizes and acts on microtubules decorated with short polyglutamate tails: severing activity increases as the number of glutamates per tubulin rises from one to eight, but decreases beyond this glutamylation threshold. Microtubule severing promotes reorganization of cellular microtubule arrays and the release of microtubules from the centrosome following nucleation. Required for membrane traffic from the endoplasmic reticulum (ER) to the Golgi and for completion of the abscission stage of cytokinesis. Also plays a role in axon growth and the formation of axonal branches. This is Spastin from Xenopus tropicalis (Western clawed frog).